We begin with the raw amino-acid sequence, 125 residues long: uncharacterized protein (125 aa).

An HTH hxlR-type domain is found at 14–112 (CPVEFTLDVI…WGESNRDVLE (99 aa)).

This is an uncharacterized protein from Bacillus subtilis (strain 168).